Here is a 448-residue protein sequence, read N- to C-terminus: Tubulin alpha-4A chain (448 aa).

An MREC motif motif is present at residues 1 to 4; sequence MREC. Gln11 provides a ligand contact to GTP. Lys40 bears the N6-acetyllysine mark. Phosphoserine is present on Ser48. A GTP-binding site is contributed by Glu71. A Mg(2+)-binding site is contributed by Glu71. Tyr83 carries the post-translational modification 3'-nitrotyrosine. GTP is bound by residues Ser140, Gly144, Thr145, Thr179, Asn206, and Asn228. Glu254 is an active-site residue. Tyr432 is subject to Phosphotyrosine. Ser439 bears the Phosphoserine mark.

This sequence belongs to the tubulin family. In terms of assembly, dimer of alpha and beta chains. A typical microtubule is a hollow water-filled tube with an outer diameter of 25 nm and an inner diameter of 15 nM. Alpha-beta heterodimers associate head-to-tail to form protofilaments running lengthwise along the microtubule wall with the beta-tubulin subunit facing the microtubule plus end conferring a structural polarity. Microtubules usually have 13 protofilaments but different protofilament numbers can be found in some organisms and specialized cells. Interacts with CFAP157. Mg(2+) is required as a cofactor. Post-translationally, some glutamate residues at the C-terminus are polyglycylated, resulting in polyglycine chains on the gamma-carboxyl group. Glycylation is mainly limited to tubulin incorporated into axonemes (cilia and flagella) whereas glutamylation is prevalent in neuronal cells, centrioles, axonemes, and the mitotic spindle. Both modifications can coexist on the same protein on adjacent residues, and lowering polyglycylation levels increases polyglutamylation, and reciprocally. Cilia and flagella glycylation is required for their stability and maintenance. Flagella glycylation controls sperm motility. Some glutamate residues at the C-terminus are polyglutamylated, resulting in polyglutamate chains on the gamma-carboxyl group. Polyglutamylation plays a key role in microtubule severing by spastin (SPAST). SPAST preferentially recognizes and acts on microtubules decorated with short polyglutamate tails: severing activity by SPAST increases as the number of glutamates per tubulin rises from one to eight, but decreases beyond this glutamylation threshold. Glutamylation is also involved in cilia motility. In terms of processing, acetylation of alpha chains at Lys-40 is located inside the microtubule lumen. This modification has been correlated with increased microtubule stability, intracellular transport and ciliary assembly. Post-translationally, methylation of alpha chains at Lys-40 is found in mitotic microtubules and is required for normal mitosis and cytokinesis contributing to genomic stability. Although this tubulin does not encode a C-terminal tyrosine, a C-terminal tyrosine can be added post-translationally by the tubulin tyrosine ligase (TTL). It can then undergo a detyrosination cycle by the tubulin tyrosine carboxypeptidase (MATCAP1/KIAA0895L).

The protein resides in the cytoplasm. Its subcellular location is the cytoskeleton. The catalysed reaction is GTP + H2O = GDP + phosphate + H(+). Its function is as follows. Tubulin is the major constituent of microtubules, a cylinder consisting of laterally associated linear protofilaments composed of alpha- and beta-tubulin heterodimers. Microtubules grow by the addition of GTP-tubulin dimers to the microtubule end, where a stabilizing cap forms. Below the cap, tubulin dimers are in GDP-bound state, owing to GTPase activity of alpha-tubulin. The polypeptide is Tubulin alpha-4A chain (TUBA4A) (Macaca fascicularis (Crab-eating macaque)).